The chain runs to 369 residues: Protein disulfide-isomerase erp38 (369 aa).

The signal sequence occupies residues 1–18 (MVLLKSLVVASLAAAVAA). 2 Thioredoxin domains span residues 19 to 130 (KSAV…EKTG) and 131 to 251 (VKAR…EKAG). Active-site nucleophile residues include cysteine 50, cysteine 53, cysteine 170, and cysteine 173. 2 disulfide bridges follow: cysteine 50/cysteine 53 and cysteine 170/cysteine 173. Residues 366-369 (KEEL) carry the Prevents secretion from ER motif.

Belongs to the protein disulfide isomerase family.

It localises to the endoplasmic reticulum lumen. The catalysed reaction is Catalyzes the rearrangement of -S-S- bonds in proteins.. This is Protein disulfide-isomerase erp38 (erp38) from Neurospora crassa (strain ATCC 24698 / 74-OR23-1A / CBS 708.71 / DSM 1257 / FGSC 987).